The primary structure comprises 355 residues: UDP-N-acetylglucosamine--N-acetylmuramyl-(pentapeptide) pyrophosphoryl-undecaprenol N-acetylglucosamine transferase (355 aa).

UDP-N-acetyl-alpha-D-glucosamine-binding positions include 14 to 16, asparagine 126, arginine 162, serine 190, isoleucine 243, 262 to 267, and glutamine 287; these read TGG and ALTVSE.

It belongs to the glycosyltransferase 28 family. MurG subfamily.

It localises to the cell inner membrane. It catalyses the reaction di-trans,octa-cis-undecaprenyl diphospho-N-acetyl-alpha-D-muramoyl-L-alanyl-D-glutamyl-meso-2,6-diaminopimeloyl-D-alanyl-D-alanine + UDP-N-acetyl-alpha-D-glucosamine = di-trans,octa-cis-undecaprenyl diphospho-[N-acetyl-alpha-D-glucosaminyl-(1-&gt;4)]-N-acetyl-alpha-D-muramoyl-L-alanyl-D-glutamyl-meso-2,6-diaminopimeloyl-D-alanyl-D-alanine + UDP + H(+). The protein operates within cell wall biogenesis; peptidoglycan biosynthesis. In terms of biological role, cell wall formation. Catalyzes the transfer of a GlcNAc subunit on undecaprenyl-pyrophosphoryl-MurNAc-pentapeptide (lipid intermediate I) to form undecaprenyl-pyrophosphoryl-MurNAc-(pentapeptide)GlcNAc (lipid intermediate II). In Vibrio parahaemolyticus serotype O3:K6 (strain RIMD 2210633), this protein is UDP-N-acetylglucosamine--N-acetylmuramyl-(pentapeptide) pyrophosphoryl-undecaprenol N-acetylglucosamine transferase.